The sequence spans 698 residues: Polyribonucleotide nucleotidyltransferase (698 aa).

Mg(2+) contacts are provided by Asp490 and Asp496. The KH domain occupies Pro557–Ile616. Positions Gly626–Arg694 constitute an S1 motif domain.

The protein belongs to the polyribonucleotide nucleotidyltransferase family. The cofactor is Mg(2+).

It is found in the cytoplasm. The enzyme catalyses RNA(n+1) + phosphate = RNA(n) + a ribonucleoside 5'-diphosphate. Its function is as follows. Involved in mRNA degradation. Catalyzes the phosphorolysis of single-stranded polyribonucleotides processively in the 3'- to 5'-direction. In Staphylococcus aureus (strain MSSA476), this protein is Polyribonucleotide nucleotidyltransferase.